Consider the following 172-residue polypeptide: Transcriptional repressor NrdR (172 aa).

Residues 3–34 (CPFCRHPDSRVVDSRTTDDGTSIRRRRQCPDC) fold into a zinc finger. Positions 46 to 136 (LMVIKRSGVT…VYRAFDSLED (91 aa)) constitute an ATP-cone domain. The tract at residues 152–172 (ERSGGGTCGTGTVPVPAGTAD) is disordered. Residues 161–172 (TGTVPVPAGTAD) are compositionally biased toward low complexity.

The protein belongs to the NrdR family. The cofactor is Zn(2+).

Its function is as follows. Negatively regulates transcription of bacterial ribonucleotide reductase nrd genes and operons by binding to NrdR-boxes. The protein is Transcriptional repressor NrdR of Streptomyces clavuligerus.